Here is a 269-residue protein sequence, read N- to C-terminus: MHVITTQVLFIFCFLLLIHSIETLAYATRLSGARVGFIASALSLFNVMVIVSRMSNMVQQPFTGHLIDDAGKNALAIVGEQFRFLIFGSTVGTILGIILLPSFVALFSRAIIHLAGGGGSVFQVFRKGFSKQGFKNALSYLRLPSISYVKGFHMRLIPKRLFVINMLITSIYTIGVLSALYAGLLAPERSTTAVMASGLINGIATMLLAIFVDPKVSVLADDVAKGKRSYIYLKWTSVTMVTSRVAGTLLAQLMFIPGAYYIAWLTKWF.

7 helical membrane-spanning segments follow: residues 1–21 (MHVITTQVLFIFCFLLLIHSI), 31–51 (SGARVGFIASALSLFNVMVIV), 84–104 (FLIFGSTVGTILGIILLPSFV), 105–125 (ALFSRAIIHLAGGGGSVFQVF), 161–181 (LFVINMLITSIYTIGVLSALY), 192–212 (TAVMASGLINGIATMLLAIFV), and 245–265 (VAGTLLAQLMFIPGAYYIAWL).

This sequence belongs to the Amj family.

Its subcellular location is the cell membrane. It functions in the pathway cell wall biogenesis; peptidoglycan biosynthesis. In terms of biological role, involved in peptidoglycan biosynthesis. Transports lipid-linked peptidoglycan precursors from the inner to the outer leaflet of the cytoplasmic membrane. May serve as a defense mechanism against naturally occurring MurJ antagonists. The chain is Lipid II flippase Amj from Bacillus subtilis (strain 168).